The sequence spans 792 residues: Probable beta-D-xylosidase 6 (792 aa).

The N-terminal stretch at 1-18 is a signal peptide; sequence MNLQLTLISLLFFTSAIA. Residues N44, N104, N124, and N239 are each glycosylated (N-linked (GlcNAc...) asparagine). The active site involves D309. N-linked (GlcNAc...) asparagine glycans are attached at residues N444 and N618.

The protein belongs to the glycosyl hydrolase 3 family.

The protein resides in the secreted. It localises to the extracellular space. Its subcellular location is the extracellular matrix. The protein is Probable beta-D-xylosidase 6 (BXL6) of Arabidopsis thaliana (Mouse-ear cress).